A 487-amino-acid polypeptide reads, in one-letter code: Meiotic recombination protein SPO11-4 (487 aa).

The segment at methionine 1–glycine 56 is disordered. One can recognise a Topo IIA-type catalytic domain in the interval lysine 119–isoleucine 252. The active-site O-(5'-phospho-DNA)-tyrosine intermediate is the tyrosine 213. Mg(2+) is bound by residues glutamate 301 and aspartate 353.

Belongs to the TOP6A family. In terms of assembly, homodimer. Interacts with TOP6B. Mg(2+) is required as a cofactor.

It localises to the nucleus. It catalyses the reaction ATP-dependent breakage, passage and rejoining of double-stranded DNA.. Functionally, required for meiotic recombination. Mediates DNA cleavage that forms the double-strand breaks (DSB) that initiate meiotic recombination. Possesses double-stranded DNA cleavage activity in vitro. The sequence is that of Meiotic recombination protein SPO11-4 (SPO11-4) from Oryza sativa subsp. japonica (Rice).